Reading from the N-terminus, the 792-residue chain is uncharacterized protein (792 aa).

Tandem repeats lie at residues 91 to 102 (NSSTNATTTASI), 103 to 114 (NVRTSATTTASI), 115 to 126 (NVRTSATTTEST), 127 to 138 (NSNTNATTTEST), 139 to 150 (NSSTNATTTASI), 151 to 162 (NVRTSATTTEST), 163 to 174 (NSSTNATTTASI), 175 to 186 (NVRTSATTTEST), 187 to 198 (NSSTNATTTASI), 199 to 210 (NVRTSATTTEST), 211 to 222 (NSNTNASTNATT), 223 to 234 (NSSTNATTTAST), 235 to 246 (NVRTSATTNATT), 247 to 258 (NSSTNATTTAST), 259 to 270 (NVRTSATTTAST), 271 to 282 (NVRTSATTTASI), 283 to 294 (NVRTSATTTESI), 295 to 306 (NSSTNATTTEST), 307 to 318 (NSNTSATTTEST), 319 to 330 (DSNTNATTTASI), 331 to 342 (NVRTSATTTEST), 343 to 354 (NSNTSATTTEST), 355 to 366 (DSNTSATTTAST), 367 to 378 (NSSTNATTTAST), and 379 to 390 (NSSTNATTTEST). A 25 X 12 AA tandem repeat of N-[SV]-[RS]-T-[NS]-A-T-T-T-[AE]-[ST]-[IT] region spans residues 91 to 390 (NSSTNATTTA…STNATTTEST (300 aa)). The segment at 113-417 (SINVRTSATT…RFHPVTDINK (305 aa)) is disordered. Over residues 118–393 (TSATTTESTN…ATTTESTNAS (276 aa)) the composition is skewed to low complexity. Residues 394-417 (AKEDANKDGNAEDNRFHPVTDINK) show a composition bias toward basic and acidic residues.

This is an uncharacterized protein from Saccharomyces cerevisiae (strain ATCC 204508 / S288c) (Baker's yeast).